Consider the following 148-residue polypeptide: MKALLTLGLLLLSVTAQAKVYNRCELARILKRNGMDGYRGVKLADWVCLAQHESNYNTRATNYNRGDRSTDYGIFQINSRYWCNDGKTPRSKNACGINCSALLQDDITAAIQCAKRVVRDPQGIRAWVAWRTQCQNRDLSQYIRNCGV.

The first 18 residues, 1-18, serve as a signal peptide directing secretion; that stretch reads MKALLTLGLLLLSVTAQA. A C-type lysozyme domain is found at 19 to 148; sequence KVYNRCELAR…LSQYIRNCGV (130 aa). 4 cysteine pairs are disulfide-bonded: cysteine 24-cysteine 146, cysteine 48-cysteine 134, cysteine 83-cysteine 99, and cysteine 95-cysteine 113. Residues glutamate 53 and aspartate 71 contribute to the active site.

This sequence belongs to the glycosyl hydrolase 22 family. As to quaternary structure, monomer. In terms of tissue distribution, expressed strongly only in small intestine.

The protein localises to the secreted. The enzyme catalyses Hydrolysis of (1-&gt;4)-beta-linkages between N-acetylmuramic acid and N-acetyl-D-glucosamine residues in a peptidoglycan and between N-acetyl-D-glucosamine residues in chitodextrins.. Functionally, lysozymes have primarily a bacteriolytic function; those in tissues and body fluids are associated with the monocyte-macrophage system and enhance the activity of immunoagents. Lyz1 is active against a range of Gram-positive and Gram-negative bacteria. Less effective than Lyz2 in killing Gram-negative bacteria. Lyz1 and Lyz2 are equally effective in killing Gram-positive bacteria. This Mus musculus (Mouse) protein is Lysozyme C-1 (Lyz1).